The sequence spans 257 residues: UPF0246 protein CLH_2088 (257 aa).

Belongs to the UPF0246 family.

The chain is UPF0246 protein CLH_2088 from Clostridium botulinum (strain Alaska E43 / Type E3).